A 146-amino-acid polypeptide reads, in one-letter code: BCL7-like protein (146 aa).

The segment at 59-146 (MAPPKIKEVK…RDAEMTSKQP (88 aa)) is disordered. 2 stretches are compositionally biased toward polar residues: residues 75-90 (NQVPSAENSQDSTSVT) and 113-134 (DSNQTFEPQNYQGGATGSTDFS). Residues 135 to 146 (SMRDAEMTSKQP) are compositionally biased toward basic and acidic residues.

It belongs to the BCL7 family. In terms of tissue distribution, ubiquitous.

The protein localises to the nucleus. Its function is as follows. Required for the terminal differentiation of seam cells, and the differentiation of distal tip cells important for normal somatic gonad and germ cell development. Plays a role in the Wnt signaling pathway, regulating the expression of beta-catenin homologs wrm-1, bar-1 and sys-1, and the localization of wrm-1 and the wnt signaling pathway component pop-1 during asymmetric cell division of seam cells and the Z-cell lineage of the somatic gonad, respectively. May have a pro-apoptotic role, possibly linked to the negative regulation of expression of anti-apoptotic factor ced-9. This is BCL7-like protein from Caenorhabditis elegans.